The sequence spans 266 residues: 3-methyl-2-oxobutanoate hydroxymethyltransferase (266 aa).

Mg(2+)-binding residues include Asp46 and Asp85. 3-methyl-2-oxobutanoate is bound by residues 46 to 47 (DS), Asp85, and Lys115. A Mg(2+)-binding site is contributed by Glu117. Glu183 serves as the catalytic Proton acceptor.

Belongs to the PanB family. In terms of assembly, homodecamer; pentamer of dimers. The cofactor is Mg(2+).

It localises to the cytoplasm. It carries out the reaction 3-methyl-2-oxobutanoate + (6R)-5,10-methylene-5,6,7,8-tetrahydrofolate + H2O = 2-dehydropantoate + (6S)-5,6,7,8-tetrahydrofolate. Its pathway is cofactor biosynthesis; (R)-pantothenate biosynthesis; (R)-pantoate from 3-methyl-2-oxobutanoate: step 1/2. Functionally, catalyzes the reversible reaction in which hydroxymethyl group from 5,10-methylenetetrahydrofolate is transferred onto alpha-ketoisovalerate to form ketopantoate. This chain is 3-methyl-2-oxobutanoate hydroxymethyltransferase, found in Trichlorobacter lovleyi (strain ATCC BAA-1151 / DSM 17278 / SZ) (Geobacter lovleyi).